Here is a 413-residue protein sequence, read N- to C-terminus: Glycosyl hydrolase family 109 protein 2 (413 aa).

Residues 26-27 (NR), aspartate 48, 96-99 (WLTH), 116-117 (EV), and asparagine 145 contribute to the NAD(+) site. Tyrosine 174 provides a ligand contact to substrate. NAD(+) contacts are provided by residues 191 to 195 (YHNHW) and tyrosine 208. Residues 208-211 (YPTH) and tyrosine 290 each bind substrate.

This sequence belongs to the Gfo/Idh/MocA family. Glycosyl hydrolase 109 subfamily. NAD(+) serves as cofactor.

Glycosidase. This chain is Glycosyl hydrolase family 109 protein 2, found in Phocaeicola vulgatus (strain ATCC 8482 / DSM 1447 / JCM 5826 / CCUG 4940 / NBRC 14291 / NCTC 11154) (Bacteroides vulgatus).